The primary structure comprises 364 residues: Nuclear hormone receptor family member nhr-53 (364 aa).

A DNA-binding region (nuclear receptor) is located at residues 20–95 (PSYCLICCEV…VGMQRSSVQQ (76 aa)). NR C4-type zinc fingers lie at residues 23 to 43 (CLICCEVADGHHFGAAACRAC) and 59 to 83 (CPKNGQCFILSNVRNMCRACRYEKC). The region spanning 110-363 (REEPVLDTMR…KNLYDMFSPT (254 aa)) is the NR LBD domain.

The protein belongs to the nuclear hormone receptor family.

The protein localises to the nucleus. In terms of biological role, orphan nuclear receptor. The chain is Nuclear hormone receptor family member nhr-53 (nhr-53) from Caenorhabditis elegans.